Consider the following 311-residue polypeptide: Pyrimidine-specific ribonucleoside hydrolase RihA (311 aa).

His-240 is an active-site residue.

Belongs to the IUNH family. RihA subfamily.

Its function is as follows. Hydrolyzes cytidine or uridine to ribose and cytosine or uracil, respectively. This Salmonella paratyphi A (strain ATCC 9150 / SARB42) protein is Pyrimidine-specific ribonucleoside hydrolase RihA.